Here is a 322-residue protein sequence, read N- to C-terminus: HPr kinase/phosphorylase (322 aa).

Active-site residues include His-146 and Lys-167. 161 to 168 (GDSGLGKS) is a binding site for ATP. Ser-168 serves as a coordination point for Mg(2+). Asp-185 (proton acceptor; for phosphorylation activity. Proton donor; for dephosphorylation activity) is an active-site residue. The tract at residues 209–218 (LEVRGLGLLD) is important for the catalytic mechanism of both phosphorylation and dephosphorylation. Glu-210 contacts Mg(2+). Arg-250 is an active-site residue. Residues 271 to 276 (QVAAGR) form an important for the catalytic mechanism of dephosphorylation region.

Belongs to the HPrK/P family. As to quaternary structure, homohexamer. It depends on Mg(2+) as a cofactor.

The catalysed reaction is [HPr protein]-L-serine + ATP = [HPr protein]-O-phospho-L-serine + ADP + H(+). It carries out the reaction [HPr protein]-O-phospho-L-serine + phosphate + H(+) = [HPr protein]-L-serine + diphosphate. In terms of biological role, catalyzes the ATP- as well as the pyrophosphate-dependent phosphorylation of a specific serine residue in HPr, a phosphocarrier protein of the phosphoenolpyruvate-dependent sugar phosphotransferase system (PTS). HprK/P also catalyzes the pyrophosphate-producing, inorganic phosphate-dependent dephosphorylation (phosphorolysis) of seryl-phosphorylated HPr (P-Ser-HPr). The polypeptide is HPr kinase/phosphorylase (Burkholderia ambifaria (strain ATCC BAA-244 / DSM 16087 / CCUG 44356 / LMG 19182 / AMMD) (Burkholderia cepacia (strain AMMD))).